A 374-amino-acid polypeptide reads, in one-letter code: Phenoloxidase-activating enzyme 1 (374 aa).

Residues 1 to 19 (MWKSLVFFVSALIWSFGSS) form the signal peptide. The propeptide at 20–120 (QDCTTPTGSR…QCGIDTTGDR (101 aa)) is activation peptide. Residues 21–74 (DCTTPTGSRSNCVSLYQCQPLYNAFEQRPLPTHVVSYLGRSQCGFEGYVPRVCC) form the Clip domain. 3 cysteine pairs are disulfide-bonded: Cys-22–Cys-73, Cys-32–Cys-63, and Cys-38–Cys-74. Over residues 83-97 (ATSARPTQAPTQGSS) the composition is skewed to polar residues. A disordered region spans residues 83 to 114 (ATSARPTQAPTQGSSDVFPEDSSPAPRNQCGI). Positions 121 to 370 (VYGGTITDLD…YIDWIQNTIA (250 aa)) constitute a Peptidase S1 domain. An intrachain disulfide couples Cys-151 to Cys-167. Residue His-166 is the Charge relay system of the active site. The Ca(2+) site is built by Glu-186 and Asp-194. Asp-228 serves as the catalytic Charge relay system. 2 disulfide bridges follow: Cys-292/Cys-307 and Cys-317/Cys-346. The Charge relay system role is filled by Ser-321.

Belongs to the peptidase S1 family. CLIP subfamily. Activated by the removal of the N-terminal inhibitory propeptide. As to expression, expressed in hemocytes.

The protein resides in the secreted. With respect to regulation, inhibited by aprotenin. Not inhibited by EDTA, PMSF or leupeptin. Its function is as follows. Serine protease which, by cleaving and activating prophenoloxidase (PPO1) after immune challenge, plays an essential role in the melanization immune response to wounding. The sequence is that of Phenoloxidase-activating enzyme 1 from Spodoptera litura (Asian cotton leafworm).